Consider the following 908-residue polypeptide: Transferrin-binding protein A (908 aa).

The N-terminal stretch at methionine 1–alanine 24 is a signal peptide. A TonB box motif is present at residues aspartate 38–lysine 45. The 126-residue stretch at arginine 51 to lysine 176 folds into the TBDR plug domain. In terms of domain architecture, TBDR beta-barrel spans glutamine 187 to phenylalanine 908. A TonB C-terminal box motif is present at residues asparagine 891–phenylalanine 908.

Belongs to the TonB-dependent receptor family. As to quaternary structure, binds both human apo- and holo-transferrin (TF), via the TF C-terminus. Forms a large complex with TF and TbpB.

Its subcellular location is the cell outer membrane. Neisseria acquires iron by extracting it from serum transferrin (TF) in its human host. Acts as a TF receptor and is required for TF utilization. Binds both apo- and holo-TF, via the TF C-terminus. This chain is Transferrin-binding protein A, found in Neisseria meningitidis serogroup B.